Here is a 288-residue protein sequence, read N- to C-terminus: MINGTVRIRLDLAYDGTDFHGWARQGDSDLRTVQKIIEDTLTLVLQRPIDLTVAGRTDAGVHATGQVAHFDVDPAALETRSIAGDPARLIRRLARLMPDDVRIHNMSFVPAEFDARFSALRRHYVYRVTTHPRGALPTRARDTAHWPRSVDISAMQAAADALIGMHDFAAFCKYREGASTIRDLQEFTWHDVSTPQEPQLYEAHVTADAFCWSMVRSLVGACLVVGEGKRADGFTEHLLGETKRSSSIPVAAACGLSLVGVDYPSDDQLGARAEQARAYRTHDELPSL.

The active-site Nucleophile is Asp-58. Tyr-124 contributes to the substrate binding site.

The protein belongs to the tRNA pseudouridine synthase TruA family. As to quaternary structure, homodimer.

The catalysed reaction is uridine(38/39/40) in tRNA = pseudouridine(38/39/40) in tRNA. Formation of pseudouridine at positions 38, 39 and 40 in the anticodon stem and loop of transfer RNAs. The polypeptide is tRNA pseudouridine synthase A (Corynebacterium diphtheriae (strain ATCC 700971 / NCTC 13129 / Biotype gravis)).